The primary structure comprises 215 residues: Probable phosphoglycerate mutase GpmB (215 aa).

Residues 8-15 (RHGETEWN), 21-22 (QG), R58, 82-85 (ELDM), and 151-152 (GI) contribute to the substrate site. The active-site Tele-phosphohistidine intermediate is the H9. E82 serves as the catalytic Proton donor/acceptor.

It belongs to the phosphoglycerate mutase family. GpmB subfamily.

The catalysed reaction is (2R)-2-phosphoglycerate = (2R)-3-phosphoglycerate. It participates in carbohydrate degradation; glycolysis; pyruvate from D-glyceraldehyde 3-phosphate: step 3/5. The chain is Probable phosphoglycerate mutase GpmB from Proteus mirabilis (strain HI4320).